Consider the following 200-residue polypeptide: Large ribosomal subunit protein uL4 (200 aa).

The disordered stretch occupies residues 38 to 68; it reads GRQGSKQQKTRSDVRGGGKRPWRQKGTGRAR. A compositionally biased stretch (basic residues) spans 54–65; that stretch reads GGKRPWRQKGTG.

This sequence belongs to the universal ribosomal protein uL4 family. Part of the 50S ribosomal subunit.

In terms of biological role, one of the primary rRNA binding proteins, this protein initially binds near the 5'-end of the 23S rRNA. It is important during the early stages of 50S assembly. It makes multiple contacts with different domains of the 23S rRNA in the assembled 50S subunit and ribosome. Its function is as follows. Forms part of the polypeptide exit tunnel. This Pseudomonas savastanoi pv. phaseolicola (strain 1448A / Race 6) (Pseudomonas syringae pv. phaseolicola (strain 1448A / Race 6)) protein is Large ribosomal subunit protein uL4.